A 227-amino-acid chain; its full sequence is Cytochrome c oxidase subunit 2 (227 aa).

Residues 1–14 (MAYPFQLGLQDATS) are Mitochondrial intermembrane-facing. Residues 15-45 (PIMEELTNFHDHTLMIVFLISSLVLYIISLM) form a helical membrane-spanning segment. Topologically, residues 46–59 (LTTKLTHTSTMDAQ) are mitochondrial matrix. The chain crosses the membrane as a helical span at residues 60–87 (EVETIWTILPAAILVLIALPSLRILYMM). Residues 88-227 (DEINNPVLTV…YFESWSASMI (140 aa)) are Mitochondrial intermembrane-facing. The Cu cation site is built by histidine 161, cysteine 196, glutamate 198, cysteine 200, histidine 204, and methionine 207. Glutamate 198 contacts Mg(2+). Residue tyrosine 218 is modified to Phosphotyrosine.

Belongs to the cytochrome c oxidase subunit 2 family. In terms of assembly, component of the cytochrome c oxidase (complex IV, CIV), a multisubunit enzyme composed of 14 subunits. The complex is composed of a catalytic core of 3 subunits MT-CO1, MT-CO2 and MT-CO3, encoded in the mitochondrial DNA, and 11 supernumerary subunits COX4I, COX5A, COX5B, COX6A, COX6B, COX6C, COX7A, COX7B, COX7C, COX8 and NDUFA4, which are encoded in the nuclear genome. The complex exists as a monomer or a dimer and forms supercomplexes (SCs) in the inner mitochondrial membrane with NADH-ubiquinone oxidoreductase (complex I, CI) and ubiquinol-cytochrome c oxidoreductase (cytochrome b-c1 complex, complex III, CIII), resulting in different assemblies (supercomplex SCI(1)III(2)IV(1) and megacomplex MCI(2)III(2)IV(2)). Found in a complex with TMEM177, COA6, COX18, COX20, SCO1 and SCO2. Interacts with TMEM177 in a COX20-dependent manner. Interacts with COX20. Interacts with COX16. The cofactor is Cu cation.

The protein resides in the mitochondrion inner membrane. The enzyme catalyses 4 Fe(II)-[cytochrome c] + O2 + 8 H(+)(in) = 4 Fe(III)-[cytochrome c] + 2 H2O + 4 H(+)(out). In terms of biological role, component of the cytochrome c oxidase, the last enzyme in the mitochondrial electron transport chain which drives oxidative phosphorylation. The respiratory chain contains 3 multisubunit complexes succinate dehydrogenase (complex II, CII), ubiquinol-cytochrome c oxidoreductase (cytochrome b-c1 complex, complex III, CIII) and cytochrome c oxidase (complex IV, CIV), that cooperate to transfer electrons derived from NADH and succinate to molecular oxygen, creating an electrochemical gradient over the inner membrane that drives transmembrane transport and the ATP synthase. Cytochrome c oxidase is the component of the respiratory chain that catalyzes the reduction of oxygen to water. Electrons originating from reduced cytochrome c in the intermembrane space (IMS) are transferred via the dinuclear copper A center (CU(A)) of subunit 2 and heme A of subunit 1 to the active site in subunit 1, a binuclear center (BNC) formed by heme A3 and copper B (CU(B)). The BNC reduces molecular oxygen to 2 water molecules using 4 electrons from cytochrome c in the IMS and 4 protons from the mitochondrial matrix. This chain is Cytochrome c oxidase subunit 2 (MT-CO2), found in Conilurus penicillatus (Brush-tailed rabbit-rat).